The primary structure comprises 610 residues: POU domain, class 6, transcription factor 1 (610 aa).

Residues 55-87 are disordered; that stretch reads SSAGAAESGGDEEGSGQSLEATEEAQLDGPVTT. The region spanning 448 to 522 is the POU-specific domain; it reads EEAINLEEIR…VLERWLAEAE (75 aa). The homeobox DNA-binding region spans 543 to 602; that stretch reads KRKRRTSFTPQAIEVLNTYFEKNSLPTGQEITEIAKELNYDREVVRVWFCNRRQTLKNTS.

This sequence belongs to the POU transcription factor family. Class-6 subfamily. In terms of tissue distribution, ubiquitously expressed during embryogenesis.

It localises to the nucleus. Transcription factor that binds with high affinity to the motif 5'-TAATGARAT-3'. This Danio rerio (Zebrafish) protein is POU domain, class 6, transcription factor 1 (pou6f1).